The following is a 1528-amino-acid chain: 5'-3' exoribonuclease 1 (1528 aa).

3 disordered regions span residues 1246–1331, 1431–1455, and 1470–1528; these read SKKA…KSSE, PPPAPHGFGQPISFPPPPPMTNVSD, and LKKF…DEST. Residues 1274 to 1304 are compositionally biased toward basic and acidic residues; it reads QSEEKLRKERAHDLLNFIKKDTNEKNSESVD. Positions 1317–1326 are enriched in basic residues; the sequence is AKKVLLKRPA. Polar residues predominate over residues 1500 to 1517; that stretch reads SSGTNSTECQSPKSQSNA. Thr1506 is modified (phosphothreonine). At Ser1510 the chain carries Phosphoserine. Positions 1518–1528 are enriched in basic and acidic residues; that stretch reads ADRDNKKDEST.

The protein belongs to the 5'-3' exonuclease family. It depends on Mg(2+) as a cofactor.

The protein localises to the cytoplasm. It is found in the perinuclear region. Its subcellular location is the P-body. Its activity is regulated as follows. 3'-phosphoadenosine 5'-phosphate (pAp) is an inhibitor of KEM1. Sodium-induced GCN4 expression reduces pAp accumulation by activating HAL2 expression, and therefore maintains mRNA degradation capacity which is likely to be important for the accurate and rapid adaptation of gene expression to salt stress. Its function is as follows. Multifunctional protein that exhibits several independent functions at different levels of the cellular processes. 5'-3' exonuclease component of the nonsense-mediated mRNA decay (NMD) which is a highly conserved mRNA degradation pathway, an RNA surveillance system whose role is to identify and rid cells of mRNA with premature termination codons and thus prevents accumulation of potentially harmful truncated proteins. The NMD pathway has a second role regulating the decay of wild-type mRNAs, and especially mRNAs that are important for telomere functions. Participate in CTH2-mediated and VTS1-mediated mRNA turnover. Involved in the degradation of several hypomodified mature tRNA species and participates in the 5'-processing or the degradation of the snoRNA precursors and rRNA processing. Involved in defense against virus and suppresses viral RNA recombination by rapidly removing the 5'-truncated RNAs, the substrates of recombination, and thus reducing the chance for recombination to occur in the parental strain. Required for the assembly of the virus-like particles of the Ty3 retrotransposon and contributes to the efficient generation of narnavirus 20S RNA by playing a major role in the elimination of the non-viral upstream sequences from the primary transcripts. Degrades single-stranded DNA (ss-DNA) and can renature complementary ss-DNA as well as catalyzes the formation of heteroduplex DNA from circular ss-DNA and homologous linear ds-DNA in vitro. Acts as a microtubule-associated protein which interacts with cytoplasmic microtubules through beta-tubulin and promotes in vitro assembly of tubulin into microtubules. Associates with microtubule functions such as chromosome transmission, nuclear migration, and SPB duplication. Has also a role in G1 to S transition and is involved in nuclear fusion during karyogamy. Required for the expression of ROK1 at the post-transcriptional level and for the alpha-factor induction of the karyogamy genes KAR3 and KAR4. Plays a role in filamentous growth. The chain is 5'-3' exoribonuclease 1 (XRN1) from Saccharomyces cerevisiae (strain ATCC 204508 / S288c) (Baker's yeast).